A 295-amino-acid chain; its full sequence is GTPase Era (295 aa).

The 168-residue stretch at 5 to 172 (YCGYAAIIGR…EQAVHQLMPE (168 aa)) folds into the Era-type G domain. Positions 13–20 (GRPNVGKS) are G1. Residue 13–20 (GRPNVGKS) coordinates GTP. A G2 region spans residues 39 to 43 (QTTRY). Positions 60-63 (DTPG) are G3. Residues 60–64 (DTPGL) and 121–124 (NKVD) contribute to the GTP site. The interval 121–124 (NKVD) is G4. The G5 stretch occupies residues 151-153 (LSA). The region spanning 203-279 (LGQEIPYSLA…FLQLWVKVKS (77 aa)) is the KH type-2 domain.

It belongs to the TRAFAC class TrmE-Era-EngA-EngB-Septin-like GTPase superfamily. Era GTPase family. In terms of assembly, monomer.

The protein resides in the cytoplasm. It localises to the cell inner membrane. An essential GTPase that binds both GDP and GTP, with rapid nucleotide exchange. Plays a role in 16S rRNA processing and 30S ribosomal subunit biogenesis and possibly also in cell cycle regulation and energy metabolism. The sequence is that of GTPase Era from Coxiella burnetii (strain RSA 331 / Henzerling II).